A 701-amino-acid chain; its full sequence is DNA-directed RNA polymerase subunit beta' (701 aa).

4 residues coordinate Zn(2+): C76, C78, C94, and C97. Mg(2+) contacts are provided by D511, D513, and D515.

Belongs to the RNA polymerase beta' chain family. RpoC1 subfamily. In terms of assembly, in plastids the minimal PEP RNA polymerase catalytic core is composed of four subunits: alpha, beta, beta', and beta''. When a (nuclear-encoded) sigma factor is associated with the core the holoenzyme is formed, which can initiate transcription. Mg(2+) is required as a cofactor. Requires Zn(2+) as cofactor.

It localises to the plastid. The protein localises to the chloroplast. It catalyses the reaction RNA(n) + a ribonucleoside 5'-triphosphate = RNA(n+1) + diphosphate. DNA-dependent RNA polymerase catalyzes the transcription of DNA into RNA using the four ribonucleoside triphosphates as substrates. This Pelargonium hortorum (Common geranium) protein is DNA-directed RNA polymerase subunit beta'.